A 728-amino-acid polypeptide reads, in one-letter code: Histone demethylase JHD2 (728 aa).

One can recognise a JmjN domain in the interval 4–47; that stretch reads IPALYPTEQEFKNPIDYLSNPHIKRLGVRYGMVKVVPPNGFCPP. The segment at 235–285 adopts a PHD-type zinc-finger fold; the sequence is DDACIVCRKTNDPKRTILCDSCDKPFHIYCLSPPLERVPSGDWICNTCIVG. One can recognise a JmjC domain in the interval 381 to 549; that stretch reads KYCDHPMNLT…YGFGAITDYK (169 aa). Residues histidine 427, aspartate 430, and histidine 517 each contribute to the Fe cation site.

This sequence belongs to the JARID1 histone demethylase family. Requires Fe(2+) as cofactor.

The protein resides in the nucleus. The catalysed reaction is N(6),N(6),N(6)-trimethyl-L-lysyl(4)-[histone H3] + 3 2-oxoglutarate + 3 O2 = L-lysyl(4)-[histone H3] + 3 formaldehyde + 3 succinate + 3 CO2. Functionally, histone demethylase that demethylates 'Lys-4' of histone H3, thereby playing a central role in histone code. Demethylates trimethylated H3 'Lys-4'. The sequence is that of Histone demethylase JHD2 (JHD2) from Saccharomyces cerevisiae (strain ATCC 204508 / S288c) (Baker's yeast).